An 816-amino-acid chain; its full sequence is Chitin synthase 1 (816 aa).

The disordered stretch occupies residues 1-21 (MLSQGEILRNPSRTRLQRPPK). Topologically, residues 1-32 (MLSQGEILRNPSRTRLQRPPKSRSERKGWWYR) are cytoplasmic. A helical membrane pass occupies residues 33 to 53 (VTIFLTCLIPNFMLRCFGMTT). The Extracellular segment spans residues 54–63 (PEVQHAWREK). Residues 64 to 84 (VALCICIFFCWIILGFTTYGM) form a helical membrane-spanning segment. The Cytoplasmic portion of the chain corresponds to 85 to 240 (NTIICKGSNQ…TPGCLLADTM (156 aa)). A helical transmembrane segment spans residues 241 to 261 (FWITTISIFGLIITKFLLGFF). The Extracellular segment spans residues 262-697 (YSWYAKRRPK…QLVVVMELFG (436 aa)). N-linked (GlcNAc...) asparagine glycosylation is found at N319 and N664. A helical transmembrane segment spans residues 698-718 (TLVLPAAIIFTFVMIAVSILI). Residues 719–720 (EP) lie on the Cytoplasmic side of the membrane. The chain crosses the membrane as a helical span at residues 721-741 (AWVPLIMLVGIFGLPAVLILI). At 742–745 (TTME) the chain is on the extracellular side. The helical transmembrane segment at 746 to 766 (IQYVFWCLVYILSIPIWNFVL) threads the bilayer. The Cytoplasmic segment spans residues 767–816 (PTYAFWHFDNFSWGDTRKVDGEGKEDEEGEFDHTKIRIRELEEFLSEANK).

This sequence belongs to the chitin synthase family. Class IV subfamily.

The protein resides in the cell membrane. The catalysed reaction is [(1-&gt;4)-N-acetyl-beta-D-glucosaminyl](n) + UDP-N-acetyl-alpha-D-glucosamine = [(1-&gt;4)-N-acetyl-beta-D-glucosaminyl](n+1) + UDP + H(+). Polymerizes chitin, a structural polymer of the cell wall and septum, by transferring the sugar moiety of UDP-GlcNAc to the non-reducing end of the growing chitin polymer. The chain is Chitin synthase 1 (CHS1) from Encephalitozoon cuniculi (strain GB-M1) (Microsporidian parasite).